The primary structure comprises 232 residues: 2-C-methyl-D-erythritol 4-phosphate cytidylyltransferase (232 aa).

It belongs to the IspD/TarI cytidylyltransferase family. IspD subfamily.

It carries out the reaction 2-C-methyl-D-erythritol 4-phosphate + CTP + H(+) = 4-CDP-2-C-methyl-D-erythritol + diphosphate. Its pathway is isoprenoid biosynthesis; isopentenyl diphosphate biosynthesis via DXP pathway; isopentenyl diphosphate from 1-deoxy-D-xylulose 5-phosphate: step 2/6. Its function is as follows. Catalyzes the formation of 4-diphosphocytidyl-2-C-methyl-D-erythritol from CTP and 2-C-methyl-D-erythritol 4-phosphate (MEP). The chain is 2-C-methyl-D-erythritol 4-phosphate cytidylyltransferase from Stenotrophomonas maltophilia (strain K279a).